Reading from the N-terminus, the 368-residue chain is Protein pxr1 (368 aa).

Disordered regions lie at residues 1–28 (MGLA…TDSF) and 161–339 (KEKA…PMGI). Residues 15–27 (DPNNTRWSGNTDS) show a composition bias toward polar residues. The G-patch domain maps to 25 to 79 (TDSFGHRMMKSQGWTPGEYLGAKDAAHAEFHTEANASHIRVVIKDNTLGLGAKIG). The segment covering 168–182 (SSEESDSSSDEEEEK) has biased composition (acidic residues). Basic residues-rich tracts occupy residues 209 to 226 (SKKS…KSKK), 242 to 254 (KSKK…KSKS), 271 to 283 (KARK…KKRK), and 301 to 312 (SSKKSKKDKHKS). The span at 313-324 (PSTSKTSTKEST) shows a compositional bias: low complexity. Polar residues predominate over residues 325-334 (PIVSESSGRS).

This sequence belongs to the PINX1 family.

It is found in the nucleus. The protein resides in the nucleolus. In terms of biological role, involved in rRNA-processing at A0, A1 and A2 sites and negatively regulates telomerase. The polypeptide is Protein pxr1 (pxr1) (Botryotinia fuckeliana (strain B05.10) (Noble rot fungus)).